Here is a 376-residue protein sequence, read N- to C-terminus: Lipoyl synthase 2, mitochondrial (376 aa).

[4Fe-4S] cluster-binding residues include cysteine 109, cysteine 114, cysteine 120, cysteine 140, cysteine 144, cysteine 147, and serine 356. One can recognise a Radical SAM core domain in the interval 125–345 (ETGTATATIM…QTLGMEMGFR (221 aa)).

This sequence belongs to the radical SAM superfamily. Lipoyl synthase family. It depends on [4Fe-4S] cluster as a cofactor.

It localises to the mitochondrion. It carries out the reaction [[Fe-S] cluster scaffold protein carrying a second [4Fe-4S](2+) cluster] + N(6)-octanoyl-L-lysyl-[protein] + 2 oxidized [2Fe-2S]-[ferredoxin] + 2 S-adenosyl-L-methionine + 4 H(+) = [[Fe-S] cluster scaffold protein] + N(6)-[(R)-dihydrolipoyl]-L-lysyl-[protein] + 4 Fe(3+) + 2 hydrogen sulfide + 2 5'-deoxyadenosine + 2 L-methionine + 2 reduced [2Fe-2S]-[ferredoxin]. It participates in protein modification; protein lipoylation via endogenous pathway; protein N(6)-(lipoyl)lysine from octanoyl-[acyl-carrier-protein]: step 2/2. Its function is as follows. Catalyzes the radical-mediated insertion of two sulfur atoms into the C-6 and C-8 positions of the octanoyl moiety bound to the lipoyl domains of lipoate-dependent enzymes, thereby converting the octanoylated domains into lipoylated derivatives. This chain is Lipoyl synthase 2, mitochondrial, found in Pisum sativum (Garden pea).